Reading from the N-terminus, the 345-residue chain is Annexin A9 (345 aa).

Annexin repeat units lie at residues 41-112, 113-184, 197-266, and 270-341; these read FSVD…ALLQ, PTAQ…ALAK, NLAE…GLAS, and NTPL…ALCR.

The protein belongs to the annexin family. As to quaternary structure, homodimer. As to expression, expressed in the stratified squamous skin epithelium, but not in epithelia of other types (at protein level).

Functionally, low affinity receptor for acetylcholine known to be targeted by disease-causing pemphigus vulgaris antibodies in keratinocytes. This Homo sapiens (Human) protein is Annexin A9 (ANXA9).